Here is a 579-residue protein sequence, read N- to C-terminus: MTDWSRRRFLQTGAALGIAGTLPQTTTEVSAASPTLEKFVQPLPIPSVREPDGQRDGADAYEIAVTEFTQQLHPDLPETTVWGFDGSYPGPTIEADAGSPVHVRFDNSGLPSEHLFPVDDRLGGTTAENHPGYDGPVPEVRTVTHFHGLELDPANDGQSDMWTSPGGVEGPRFDSAWQELPMEQGRTTSTYHDHTLGITRLNAYAGLLGLYSITTDAERELGLPSGDYDIPLLLQDKEFNDDGSLHYPEEFVSAFLGDTAVVNGAVWPYVEVEPRRYRFRILNGANHRSFDLQLESESGSGVPTMYQFAPGHGFLESVVPIGPNGDLDSLLLTPFERGELVVDFSDHAGETLTLANGADMGPELTDLVEFRVSDPSTPPEDASADPTSLSLPTPASYDESDARVTREMTLGTEVRNGLITHTLNGHVFGDEDAPVYPQLGATEIWELQNESGGRHPIHLHLVTFRVIGRGPDGTQPPDPNELGPKDTVRVDPGERVRILVTFEGYTGQFPWHCHMLEHEDNKMMIPFVVENPVADYANEENVVDATGLTDAVGDWRNETLETEVLLEVIDQWRSGDEVA.

The tat-type signal signal peptide spans 1-31; that stretch reads MTDWSRRRFLQTGAALGIAGTLPQTTTEVSA. The Plastocyanin-like 1 domain maps to 82–214; that stretch reads WGFDGSYPGP…AGLLGLYSIT (133 aa). The Cu cation site is built by H145, H147, H192, and H194. Positions 372-401 are disordered; it reads VSDPSTPPEDASADPTSLSLPTPASYDESD. A Plastocyanin-like 2 domain is found at 423–530; sequence LNGHVFGDED…NKMMIPFVVE (108 aa). N449 carries an N-linked (GlcNAc...) asparagine glycan. Cu cation is bound by residues H455, H458, H460, H512, C513, H514, H518, and M523. A glycan (N-linked (GlcNAc...) asparagine) is linked at N557.

This sequence belongs to the multicopper oxidase family. Requires Cu(2+) as cofactor. Exported by the Tat system. Post-translationally, glycosylated.

The protein localises to the secreted. The enzyme catalyses 4 hydroquinone + O2 = 4 benzosemiquinone + 2 H2O. Inhibited by 1 mM NaN(3), 10 mM thiourea, 10 mM 1,10-phenanthroline, 0.1 mM DL-dithiothreitol (DTT) and 1 mM L-cysteine. The inhibition by DTT and L-cysteine is likely caused by reduction of the oxidized substrate and not by inhibition of the enzyme. Functionally, catalyzes the oxidation of a wide variety of organic substrates, including bilirubin, syringaldazine (SGZ), 2,2'-azino-di-(3-ethylbenzothiazoline)-6-sulfonic acid (ABTS) and dimethoxyphenol (DMP). No oxidation of Fe(2+) or guaiacol. This chain is Laccase (lccA), found in Haloferax volcanii (strain ATCC 29605 / DSM 3757 / JCM 8879 / NBRC 14742 / NCIMB 2012 / VKM B-1768 / DS2) (Halobacterium volcanii).